The sequence spans 280 residues: Lipase chaperone (280 aa).

Residues 5-22 (ALTIITIALGSLGAVYFL) traverse the membrane as a helical segment.

The protein belongs to the lipase chaperone family.

It localises to the cell inner membrane. Functionally, may be involved in the folding of the extracellular lipase during its passage through the periplasm. The chain is Lipase chaperone (lifO) from Vibrio vulnificus (strain CMCP6).